We begin with the raw amino-acid sequence, 122 residues long: MIQTESRLEVADNTGAREVLCIKVLGGSKRRYASVGDIIKVTVKDAAPRGRVKKGDIYNAVVVRTAKGVRRADGSLIKFDGNAAVLLNNKLEPIGTRIFGPVTRELRTERFMKIVSLAPEVL.

Belongs to the universal ribosomal protein uL14 family. As to quaternary structure, part of the 50S ribosomal subunit. Forms a cluster with proteins L3 and L19. In the 70S ribosome, L14 and L19 interact and together make contacts with the 16S rRNA in bridges B5 and B8.

Its function is as follows. Binds to 23S rRNA. Forms part of two intersubunit bridges in the 70S ribosome. The sequence is that of Large ribosomal subunit protein uL14 from Cupriavidus taiwanensis (strain DSM 17343 / BCRC 17206 / CCUG 44338 / CIP 107171 / LMG 19424 / R1) (Ralstonia taiwanensis (strain LMG 19424)).